We begin with the raw amino-acid sequence, 315 residues long: MSCNIIKKISNKRYYSINYKKKTKTISFYKYCKIENIDCIQEKLFEICKKLEILGRIYISYEGINAHISIKKHKIEELKIFIKKTFDYLTDIRFNLYSDNKKQPFKKLKIKKKLNILNCGIKDCSFDIKNTGHKLTANDFNAILMKNDFILVDMRNSYEYEIGHFENALKISSKTFRQQLKLLINNLKFYKSKNIIMYCTGGIRCEAASAWMMHNGFKYVSFLDGGIIEYVNFIKKNNYPMKFLGKIFVFDDRLYEKVTSDVLSLCHQCKIQPCDNYINCKNKKCNSLFIQCIYCNKTLNEFCSNFCNEYYQSKN.

Residues Met-145–Lys-235 enclose the Rhodanese domain. Residue Cys-199 is the Cysteine persulfide intermediate of the active site.

This sequence belongs to the TrhO family.

It carries out the reaction uridine(34) in tRNA + AH2 + O2 = 5-hydroxyuridine(34) in tRNA + A + H2O. Catalyzes oxygen-dependent 5-hydroxyuridine (ho5U) modification at position 34 in tRNAs. The chain is tRNA uridine(34) hydroxylase from Wigglesworthia glossinidia brevipalpis.